Here is a 239-residue protein sequence, read N- to C-terminus: Ribulose-1,5-bisphosphate 5-phosphatase (239 aa).

Aspartate 8 acts as the Nucleophile in catalysis. Residues aspartate 8, aspartate 10, and aspartate 184 each contribute to the Mg(2+) site. Aspartate 10 (proton donor) is an active-site residue. Residues 205-239 (PSEESDATESADRAATERQADHSIDTLGELTDLVS) are disordered. Basic and acidic residues predominate over residues 214–228 (SADRAATERQADHSI).

The protein belongs to the HAD-like hydrolase superfamily. Requires Mg(2+) as cofactor. The cofactor is Mn(2+). Co(2+) is required as a cofactor. Ni(2+) serves as cofactor.

It catalyses the reaction D-ribulose 1,5-bisphosphate + H2O = D-ribulose 1-phosphate + phosphate. Its activity is regulated as follows. Requires both monovalent and divalent ions for optimal activity. Optimal KCl concentration is higher than 2.5 M. In terms of biological role, phosphatase involved in the non-carboxylating pentose bisphosphate pathway, a nucleoside degradation pathway present in some halophilic archaea. Catalyzes the dephosphorylation of ribulose 1,5-bisphosphate (RuBP) to ribulose 1-phosphate (Ru1P). Shows a strict substrate specificity toward RuBP. This Halopiger xanaduensis (strain DSM 18323 / JCM 14033 / SH-6) protein is Ribulose-1,5-bisphosphate 5-phosphatase.